The following is a 936-amino-acid chain: Aftiphilin (936 aa).

The segment at 1–36 (MEPDIIRMYSSSPPPLDNGAEDDDDDEFGEFGGFSE) is disordered. The tract at residues 1–523 (MEPDIIRMYS…ARKSSGTGTE (523 aa)) is interaction with AP1G1, AP1G2, GGA1 and GGA3. Over residues 19-29 (GAEDDDDDEFG) the composition is skewed to acidic residues. Positions 28–31 (FGEF) match the WXXF motif 1 motif. Phosphoserine is present on Ser-151. Disordered stretches follow at residues 197 to 216 (TDDL…STHS) and 374 to 409 (KTSD…LDDS). The span at 374–389 (KTSDDEVGSPKEESRK) shows a compositional bias: basic and acidic residues. The segment at 386-610 (ESRKFTNFQS…EAWQSHRTDE (225 aa)) is interaction with AP1G1. At Ser-395 the chain carries Phosphoserine. A WXXF motif 2 motif is present at residues 432–435 (FGDF). The WXXF motif 3 (partial) motif lies at 436 to 438 (GDF). The short motif at 478–481 (FGEF) is the WXXF motif 4 element. Ser-518 carries the phosphoserine modification. Residues 589-637 (GDQQATESHHRKEAWQSHRTDENIDTPGTPKTHSVPSATSKGAVASGHL) form a disordered region. Over residues 595 to 610 (ESHHRKEAWQSHRTDE) the composition is skewed to basic and acidic residues. Thr-617 carries the phosphothreonine modification. The segment covering 617-628 (TPKTHSVPSATS) has biased composition (polar residues). The CLTCL1/Clathrin-binding motif lies at 716–718 (YQW). The interval 825-829 (LLNLD) is clathrin-binding.

Self-associates. Interacts with GGA1 (via GAE domain). Interacts with GGA3 (via GAE domain), AP1G1 (via GAE domain) and AP1G2 (via GAE domain). Component of the aftiphilin/p200/gamma-synergin complex, at least composed of AFTPH/aftiphilin, HEATR5B/p200a and SYNRG/gamma-synergin, which plays a role in the AP1G1/AP-1-mediated protein trafficking from early to recycling endosomes. Within the complex interacts with HEATR5B/p200a and SYNRG/gamma-synergin; the interactions are direct. Interacts with AP1G1/AP-1; the interaction is required to recruit AFTPH/aftiphilin to the perinuclear region of the cell. Interacts with CLTCL1/Clathrin.

It is found in the cytoplasm. The protein localises to the perinuclear region. Its subcellular location is the cytoplasmic vesicle. The protein resides in the clathrin-coated vesicle. Its function is as follows. Component of clathrin-coated vesicles. Component of the aftiphilin/p200/gamma-synergin complex, which plays roles in AP1G1/AP-1-mediated protein trafficking including the trafficking of transferrin from early to recycling endosomes, and the membrane trafficking of furin and the lysosomal enzyme cathepsin D between the trans-Golgi network (TGN) and endosomes. In Homo sapiens (Human), this protein is Aftiphilin (AFTPH).